The sequence spans 376 residues: 3-dehydroquinate synthase (376 aa).

Residues 115 to 119 (GVIGD), 139 to 140 (TS), K152, and K161 contribute to the NAD(+) site. Zn(2+)-binding residues include E194, H256, and H275.

The protein belongs to the sugar phosphate cyclases superfamily. Dehydroquinate synthase family. The cofactor is Co(2+). Requires Zn(2+) as cofactor. NAD(+) serves as cofactor.

The protein resides in the cytoplasm. It carries out the reaction 7-phospho-2-dehydro-3-deoxy-D-arabino-heptonate = 3-dehydroquinate + phosphate. It participates in metabolic intermediate biosynthesis; chorismate biosynthesis; chorismate from D-erythrose 4-phosphate and phosphoenolpyruvate: step 2/7. Functionally, catalyzes the conversion of 3-deoxy-D-arabino-heptulosonate 7-phosphate (DAHP) to dehydroquinate (DHQ). The protein is 3-dehydroquinate synthase of Rhizobium etli (strain CIAT 652).